The primary structure comprises 287 residues: Probable ketose 3-epimerase (287 aa).

Glutamate 152 acts as the Proton donor/acceptor in catalysis. The Mn(2+) site is built by glutamate 152 and aspartate 185. Histidine 188 contributes to the substrate binding site. Histidine 211 is a binding site for Mn(2+). Arginine 217 contacts substrate. Glutamate 246 serves as the catalytic Proton donor/acceptor. Glutamate 246 serves as a coordination point for Mn(2+).

Belongs to the hyi family. It depends on Mn(2+) as a cofactor.

Functionally, probably catalyzes the epimerization of ketopentoses and/or ketohexoses at the C3 position. This is Probable ketose 3-epimerase from Synechocystis sp. (strain ATCC 27184 / PCC 6803 / Kazusa).